The chain runs to 273 residues: Dermonecrotic toxin LspaSicTox-alphaIA1iii (273 aa).

Histidine 5 is a catalytic residue. Mg(2+)-binding residues include glutamate 25 and aspartate 27. Histidine 41 (nucleophile) is an active-site residue. 2 cysteine pairs are disulfide-bonded: cysteine 45-cysteine 51 and cysteine 47-cysteine 190. Aspartate 85 serves as a coordination point for Mg(2+).

It belongs to the arthropod phospholipase D family. Class II subfamily. It depends on Mg(2+) as a cofactor. As to expression, expressed by the venom gland.

It is found in the secreted. It catalyses the reaction an N-(acyl)-sphingosylphosphocholine = an N-(acyl)-sphingosyl-1,3-cyclic phosphate + choline. The enzyme catalyses an N-(acyl)-sphingosylphosphoethanolamine = an N-(acyl)-sphingosyl-1,3-cyclic phosphate + ethanolamine. It carries out the reaction a 1-acyl-sn-glycero-3-phosphocholine = a 1-acyl-sn-glycero-2,3-cyclic phosphate + choline. The catalysed reaction is a 1-acyl-sn-glycero-3-phosphoethanolamine = a 1-acyl-sn-glycero-2,3-cyclic phosphate + ethanolamine. Its function is as follows. Dermonecrotic toxins cleave the phosphodiester linkage between the phosphate and headgroup of certain phospholipids (sphingolipid and lysolipid substrates), forming an alcohol (often choline) and a cyclic phosphate. This toxin acts on sphingomyelin (SM). It may also act on ceramide phosphoethanolamine (CPE), lysophosphatidylcholine (LPC) and lysophosphatidylethanolamine (LPE), but not on lysophosphatidylserine (LPS), and lysophosphatidylglycerol (LPG). It acts by transphosphatidylation, releasing exclusively cyclic phosphate products as second products. Induces dermonecrosis, hemolysis, increased vascular permeability, edema, inflammatory response, and platelet aggregation. This Loxosceles spadicea (Recluse spider) protein is Dermonecrotic toxin LspaSicTox-alphaIA1iii.